The primary structure comprises 228 residues: Cytidylate kinase (228 aa).

Position 12 to 20 (12 to 20 (GPSGSGKGT)) interacts with ATP.

Belongs to the cytidylate kinase family. Type 1 subfamily.

The protein localises to the cytoplasm. The enzyme catalyses CMP + ATP = CDP + ADP. The catalysed reaction is dCMP + ATP = dCDP + ADP. This Pseudomonas putida (strain ATCC 47054 / DSM 6125 / CFBP 8728 / NCIMB 11950 / KT2440) protein is Cytidylate kinase.